The sequence spans 281 residues: MAWFKREKKGISTSTEEKKEAPDGLWNKCPNCKKALHSADLLENKYVCQYCNYHLRVGSKEYFQVLFDNNQFTELFPNLTSGDPLNFTDSKPYTERLIESMAKTGLKDAIRAAHGKIEGEDLVVACMDFNFIGGSMGSVVGEKIARSIDYSIKHKIPFLMISKSGGARMMEAAFSLMQMAKTSAKLALLSQAKIPYISLLTDPTTGGVTASYAMLGDINIAEPGSLIGFAGPRVIKETIKKDLPKGFQTAEFVLEHGFLDFIVDRRAMKAKLAAFLKMMKN.

A disordered region spans residues 1 to 23; that stretch reads MAWFKREKKGISTSTEEKKEAPD. One can recognise a CoA carboxyltransferase N-terminal domain in the interval 25–281; the sequence is LWNKCPNCKK…LAAFLKMMKN (257 aa). Zn(2+) contacts are provided by C29, C32, C48, and C51. A C4-type zinc finger spans residues 29 to 51; the sequence is CPNCKKALHSADLLENKYVCQYC.

The protein belongs to the AccD/PCCB family. As to quaternary structure, acetyl-CoA carboxylase is a heterohexamer composed of biotin carboxyl carrier protein (AccB), biotin carboxylase (AccC) and two subunits each of ACCase subunit alpha (AccA) and ACCase subunit beta (AccD). Requires Zn(2+) as cofactor.

The protein resides in the cytoplasm. The enzyme catalyses N(6)-carboxybiotinyl-L-lysyl-[protein] + acetyl-CoA = N(6)-biotinyl-L-lysyl-[protein] + malonyl-CoA. It participates in lipid metabolism; malonyl-CoA biosynthesis; malonyl-CoA from acetyl-CoA: step 1/1. Its function is as follows. Component of the acetyl coenzyme A carboxylase (ACC) complex. Biotin carboxylase (BC) catalyzes the carboxylation of biotin on its carrier protein (BCCP) and then the CO(2) group is transferred by the transcarboxylase to acetyl-CoA to form malonyl-CoA. This is Acetyl-coenzyme A carboxylase carboxyl transferase subunit beta from Pedobacter heparinus (strain ATCC 13125 / DSM 2366 / CIP 104194 / JCM 7457 / NBRC 12017 / NCIMB 9290 / NRRL B-14731 / HIM 762-3).